The sequence spans 118 residues: Fluoride-specific ion channel FluC 2 (118 aa).

Transmembrane regions (helical) follow at residues 1–21 (MIEA…RFAI), 33–53 (FPIA…YIIG), 55–75 (GVTT…FTTF), and 93–113 (TFLL…FLGM). Na(+) contacts are provided by Gly-70 and Thr-73.

Belongs to the fluoride channel Fluc/FEX (TC 1.A.43) family.

It is found in the cell membrane. The enzyme catalyses fluoride(in) = fluoride(out). Na(+) is not transported, but it plays an essential structural role and its presence is essential for fluoride channel function. Its function is as follows. Fluoride-specific ion channel. Important for reducing fluoride concentration in the cell, thus reducing its toxicity. The chain is Fluoride-specific ion channel FluC 2 from Bacillus thuringiensis subsp. konkukian (strain 97-27).